The following is a 367-amino-acid chain: MYVKYLKLINFRNYKELNIELDKNINVFIGNNAQGKTNVLESIYYASIGRSHRTSKDKELIKWQESNSYIKIYVAKERLDKTIEIRVLKEGKKAINVNSININKLSELFGILNVVIFSPEDLSIVKESPSFRRKFLDIELSKLSKQYYYNLVQYQKVLNERNMLLKKGGDEVPNIIGVYDEQLARFGSNIIREREKYLKKLNDIGKKIHLEITSDKEEISFTYLSSIKNKNMDDGKIEEIFLQEIIKNRNSDIEKRYTSVGPHRDDFLININNVNTRSYGSQGQQRTATLTIKFASLDIIKDEIGEYPVLLLDDVLSELDSSRQKYILSSIRDIQTIITCTGIENIKKYLKNDAKIFKVENGECIEN.

An ATP-binding site is contributed by 30–37 (GNNAQGKT).

Belongs to the RecF family.

The protein localises to the cytoplasm. Its function is as follows. The RecF protein is involved in DNA metabolism; it is required for DNA replication and normal SOS inducibility. RecF binds preferentially to single-stranded, linear DNA. It also seems to bind ATP. The chain is DNA replication and repair protein RecF from Clostridium tetani (strain Massachusetts / E88).